Reading from the N-terminus, the 296-residue chain is Ribosomal RNA small subunit methyltransferase H (296 aa).

S-adenosyl-L-methionine is bound by residues 38 to 40 (GAH), E57, F88, D103, and H110.

The protein belongs to the methyltransferase superfamily. RsmH family.

It localises to the cytoplasm. The enzyme catalyses cytidine(1402) in 16S rRNA + S-adenosyl-L-methionine = N(4)-methylcytidine(1402) in 16S rRNA + S-adenosyl-L-homocysteine + H(+). In terms of biological role, specifically methylates the N4 position of cytidine in position 1402 (C1402) of 16S rRNA. The sequence is that of Ribosomal RNA small subunit methyltransferase H from Borreliella afzelii (strain PKo) (Borrelia afzelii).